The following is a 193-amino-acid chain: Xanthine phosphoribosyltransferase (193 aa).

Xanthine contacts are provided by L20 and N27. Position 128 to 132 (128 to 132) interacts with 5-phospho-alpha-D-ribose 1-diphosphate; it reads ASGGT. K156 is a xanthine binding site.

Belongs to the purine/pyrimidine phosphoribosyltransferase family. Xpt subfamily. In terms of assembly, homodimer.

The protein resides in the cytoplasm. It catalyses the reaction XMP + diphosphate = xanthine + 5-phospho-alpha-D-ribose 1-diphosphate. It participates in purine metabolism; XMP biosynthesis via salvage pathway; XMP from xanthine: step 1/1. In terms of biological role, converts the preformed base xanthine, a product of nucleic acid breakdown, to xanthosine 5'-monophosphate (XMP), so it can be reused for RNA or DNA synthesis. In Deinococcus deserti (strain DSM 17065 / CIP 109153 / LMG 22923 / VCD115), this protein is Xanthine phosphoribosyltransferase.